A 226-amino-acid chain; its full sequence is uncharacterized protein (226 aa).

Belongs to the mimivirus L246/L426 family.

This is an uncharacterized protein from Acanthamoeba polyphaga mimivirus (APMV).